The chain runs to 197 residues: Imidazoleglycerol-phosphate dehydratase (197 aa).

It belongs to the imidazoleglycerol-phosphate dehydratase family.

It localises to the cytoplasm. The enzyme catalyses D-erythro-1-(imidazol-4-yl)glycerol 3-phosphate = 3-(imidazol-4-yl)-2-oxopropyl phosphate + H2O. Its pathway is amino-acid biosynthesis; L-histidine biosynthesis; L-histidine from 5-phospho-alpha-D-ribose 1-diphosphate: step 6/9. This is Imidazoleglycerol-phosphate dehydratase from Methylococcus capsulatus (strain ATCC 33009 / NCIMB 11132 / Bath).